A 153-amino-acid chain; its full sequence is Probable histone H2A.4 (153 aa).

Residues 1–12 (MDSGTKVKKGAA) are compositionally biased toward basic residues. Disordered regions lie at residues 1 to 30 (MDSGTKVKKGAAGRRSGGGPKKKPVSRSVK) and 129 to 153 (KSEKAASTTKTPKSPSKATKSPKKS). Residues 133–147 (AASTTKTPKSPSKAT) are compositionally biased toward low complexity. The short motif at 149-152 (SPKK) is the SPKK motif element.

Belongs to the histone H2A family. In terms of assembly, the nucleosome is a histone octamer containing two molecules each of H2A, H2B, H3 and H4 assembled in one H3-H4 heterotetramer and two H2A-H2B heterodimers. The octamer wraps approximately 147 bp of DNA. Not ubiquitinated.

It is found in the nucleus. The protein resides in the chromosome. In terms of biological role, core component of nucleosome. Nucleosomes wrap and compact DNA into chromatin, limiting DNA accessibility to the cellular machineries which require DNA as a template. Histones thereby play a central role in transcription regulation, DNA repair, DNA replication and chromosomal stability. DNA accessibility is regulated via a complex set of post-translational modifications of histones, also called histone code, and nucleosome remodeling. The sequence is that of Probable histone H2A.4 from Arabidopsis thaliana (Mouse-ear cress).